The primary structure comprises 234 residues: Demethylmenaquinone methyltransferase (234 aa).

Residues Thr58, Asp79, and 106–107 (NA) each bind S-adenosyl-L-methionine.

It belongs to the class I-like SAM-binding methyltransferase superfamily. MenG/UbiE family.

The catalysed reaction is a 2-demethylmenaquinol + S-adenosyl-L-methionine = a menaquinol + S-adenosyl-L-homocysteine + H(+). It participates in quinol/quinone metabolism; menaquinone biosynthesis; menaquinol from 1,4-dihydroxy-2-naphthoate: step 2/2. Functionally, methyltransferase required for the conversion of demethylmenaquinol (DMKH2) to menaquinol (MKH2). This is Demethylmenaquinone methyltransferase from Geobacillus stearothermophilus (Bacillus stearothermophilus).